A 359-amino-acid chain; its full sequence is Lachesin (359 aa).

Residues 1 to 25 (MWRPSISNCVWSTLLLAIFVQQTLA) form the signal peptide. An Ig-like V-type domain is found at 29 to 130 (PTISYITQEQ…HKVSAEVKLS (102 aa)). Cysteines 50 and 113 form a disulfide. N-linked (GlcNAc...) asparagine glycosylation is found at Asn92 and Asn140. Ig-like C2-type domains lie at 135–221 (PVIS…INVE) and 226–317 (PVIT…ARVN). Disulfide bonds link Cys157-Cys204 and Cys247-Cys303. Ala336 carries the GPI-anchor amidated alanine lipid modification. Residues 337–359 (GAEDVSATSFALVGILAALLFAR) constitute a propeptide, removed in mature form.

In terms of tissue distribution, expressed on differentiating neuronal cells from the onset of neurogenesis in both the central and peripheral nervous systems. First detected in the cellularized blastoderm, apart from in the ventral side. Expression persists uniformly in the early ectoderm until the end of gastrulation. From stage 10, expressed in an alternating strong/weak pattern in each segment until stage 15 when it disappears. From stage 11, expressed in subsets of neurons and later subsets of glial cells. From early stage 13, strongly expressed in trachea, hindgut, foregut and the nervous system.

It is found in the cell membrane. Its function is as follows. Required for normal tracheal development and maintenance of the trans-epithelial diffusion barrier. Functions as a homophilic cell-adhesion molecule. May play a role in early neuronal differentiation and axon outgrowth. The sequence is that of Lachesin (Lac) from Drosophila melanogaster (Fruit fly).